A 165-amino-acid chain; its full sequence is MMIIGIDPGLEFTGWGVVSSTNSQSVCLLDSGVISTRGISRESEKLYKIYVSLLSVLSLYKIDEASIEKVFINSNPRSSMSLCYARAASTISVMSRGIDIYEYSSTAIKKCITGNGMAPKEQVSFMVRSSLGIKQDVEINNHSSDAIAAALCHVYNTRNRNFALK.

Residues D7, E68, and H142 contribute to the active site. Residues D7, E68, and H142 each contribute to the Mg(2+) site.

Belongs to the RuvC family. In terms of assembly, homodimer which binds Holliday junction (HJ) DNA. The HJ becomes 2-fold symmetrical on binding to RuvC with unstacked arms; it has a different conformation from HJ DNA in complex with RuvA. In the full resolvosome a probable DNA-RuvA(4)-RuvB(12)-RuvC(2) complex forms which resolves the HJ. The cofactor is Mg(2+).

The protein localises to the cytoplasm. It catalyses the reaction Endonucleolytic cleavage at a junction such as a reciprocal single-stranded crossover between two homologous DNA duplexes (Holliday junction).. Functionally, the RuvA-RuvB-RuvC complex processes Holliday junction (HJ) DNA during genetic recombination and DNA repair. Endonuclease that resolves HJ intermediates. Cleaves cruciform DNA by making single-stranded nicks across the HJ at symmetrical positions within the homologous arms, yielding a 5'-phosphate and a 3'-hydroxyl group; requires a central core of homology in the junction. The consensus cleavage sequence is 5'-(A/T)TT(C/G)-3'. Cleavage occurs on the 3'-side of the TT dinucleotide at the point of strand exchange. HJ branch migration catalyzed by RuvA-RuvB allows RuvC to scan DNA until it finds its consensus sequence, where it cleaves and resolves the cruciform DNA. The chain is Crossover junction endodeoxyribonuclease RuvC from Anaplasma marginale (strain St. Maries).